The sequence spans 90 residues: Sec-independent protein translocase protein TatAo (90 aa).

Residues 8–28 traverse the membrane as a helical segment; the sequence is FPGLPGGPELLIVLLIVVLLF. Residues 39–90 are disordered; the sequence is SSGQAMGEFRRGREEIEEELKKGAEGGDDEGENGDEAEADDADATETEAESR. Residues 46–63 are compositionally biased toward basic and acidic residues; sequence EFRRGREEIEEELKKGAE. Acidic residues predominate over residues 64-90; it reads GGDDEGENGDEAEADDADATETEAESR.

This sequence belongs to the TatA/E family. As to quaternary structure, forms a complex with TatC. Cytoplasmic and membrane-bound TatA form high-molecular-weight complexes.

The protein localises to the cell membrane. Its subcellular location is the cytoplasm. Its function is as follows. Part of the twin-arginine translocation (Tat) system that transports large folded proteins containing a characteristic twin-arginine motif in their signal peptide across membranes. TatA could form the protein-conducting channel of the Tat system. This chain is Sec-independent protein translocase protein TatAo, found in Haloferax volcanii (strain ATCC 29605 / DSM 3757 / JCM 8879 / NBRC 14742 / NCIMB 2012 / VKM B-1768 / DS2) (Halobacterium volcanii).